The sequence spans 707 residues: ATP-dependent RNA helicase DHX33 (707 aa).

Positions 1 to 64 are disordered; the sequence is MPEEAGFPPA…LAQPSASPYP (64 aa). The interval 1–80 is required for nucleolar location; that stretch reads MPEEAGFPPA…RRSLPIFQAR (80 aa). Residues 39 to 49 show a composition bias toward gly residues; it reads GSGGRGGGGGR. Positions 50–64 are enriched in low complexity; the sequence is RQQPPLAQPSASPYP. The Helicase ATP-binding domain maps to 84–252; it reads LAQLRNLDNA…FNGAPVLYLE (169 aa). Residue 97-104 participates in ATP binding; that stretch reads GETGSGKT. The short motif at 194–197 is the DEAH box element; sequence DEAH. One can recognise a Helicase C-terminal domain in the interval 277–450; the sequence is SVFQIHQEAP…SVMLQLLAMK (174 aa). Residues 471-562 are HA2; required for interaction with EIF3G and RPL26; it reads AIAQLDLLGA…ISSEGDHMTL (92 aa). The Critical for rDNA-binding motif lies at 547 to 558; it reads GVRKKFISSEGD.

Belongs to the DEAD box helicase family. DEAH subfamily. Interacts with UBTF. Interacts with DDX3X, EIF3G and EIF3H; the interaction is independent of RNA. Interacts (via HA2 region and Helicase C-terminal domain) with the components of the large ribosomal subunit RPL3, RPL7, RPL26 and RPL27. Interacts (via DEAH box) with NLRP3 (via NACHT domain). Binds to mRNA. Binds to double-stranded RNA (via the helicase C-terminal domain). Interacts (via the helicase C-terminal domain) with MAVS. Ubiquitinated, leading to its degradation by the proteasome. Deubiquitinated by USP36.

The protein localises to the nucleus. It is found in the nucleolus. It localises to the nucleoplasm. The protein resides in the cytoplasm. Its subcellular location is the inflammasome. The enzyme catalyses ATP + H2O = ADP + phosphate + H(+). Its function is as follows. Implicated in nucleolar organization, ribosome biogenesis, protein synthesis and cytoplasmic dsRNA sensing. Stimulates RNA polymerase I transcription of the 47S precursor rRNA. Associates with ribosomal DNA (rDNA) loci where it is involved in POLR1A recruitment. In the cytoplasm, promotes elongation-competent 80S ribosome assembly at the late stage of mRNA translation initiation. Senses cytosolic dsRNA mediating NLRP3 inflammasome formation in macrophages and type I interferon production in myeloid dendritic cells. Required for NLRP3 activation induced by viral dsRNA and bacterial RNA. In dendritic cells, required for induction of type I interferon production induced by cytoplasmic dsRNA via the activation of MAPK and NF-kappa-B signaling pathways. The protein is ATP-dependent RNA helicase DHX33 of Homo sapiens (Human).